The sequence spans 531 residues: CTP synthase (531 aa).

Residues 1-267 (MTKYIFVTGG…DQIVCEHLRL (267 aa)) form an amidoligase domain region. Ser13 provides a ligand contact to CTP. Ser13 is a UTP binding site. 14-19 (SLGKGI) contributes to the ATP binding site. Tyr54 is a binding site for L-glutamine. Residue Asp71 participates in ATP binding. Asp71 and Glu141 together coordinate Mg(2+). CTP-binding positions include 148–150 (DIE), 188–193 (KTKPTQ), and Lys224. Residues 188–193 (KTKPTQ) and Lys224 each bind UTP. 240-242 (RDA) lines the ATP pocket. In terms of domain architecture, Glutamine amidotransferase type-1 spans 292-531 (KIALVGKYVE…REFVRASLKE (240 aa)). Gly354 contributes to the L-glutamine binding site. Residue Cys381 is the Nucleophile; for glutamine hydrolysis of the active site. L-glutamine is bound by residues 382-385 (LGMQ), Glu405, and Arg462. Catalysis depends on residues His507 and Glu509.

This sequence belongs to the CTP synthase family. In terms of assembly, homotetramer.

It catalyses the reaction UTP + L-glutamine + ATP + H2O = CTP + L-glutamate + ADP + phosphate + 2 H(+). It carries out the reaction L-glutamine + H2O = L-glutamate + NH4(+). The enzyme catalyses UTP + NH4(+) + ATP = CTP + ADP + phosphate + 2 H(+). Its pathway is pyrimidine metabolism; CTP biosynthesis via de novo pathway; CTP from UDP: step 2/2. Allosterically activated by GTP, when glutamine is the substrate; GTP has no effect on the reaction when ammonia is the substrate. The allosteric effector GTP functions by stabilizing the protein conformation that binds the tetrahedral intermediate(s) formed during glutamine hydrolysis. Inhibited by the product CTP, via allosteric rather than competitive inhibition. In terms of biological role, catalyzes the ATP-dependent amination of UTP to CTP with either L-glutamine or ammonia as the source of nitrogen. Regulates intracellular CTP levels through interactions with the four ribonucleotide triphosphates. The sequence is that of CTP synthase from Geobacillus kaustophilus (strain HTA426).